Here is a 494-residue protein sequence, read N- to C-terminus: Metalloprotease TIKI1 (494 aa).

Residues 1–25 form the signal peptide; sequence MTMMTMMMVSWSAFLQICWILMVRA. Over 26–467 the chain is Extracellular; that stretch reads NQFNPGEPSG…QEHERANHDR (442 aa). 2 N-linked (GlcNAc...) asparagine glycosylation sites follow: asparagine 234 and asparagine 282. The helical transmembrane segment at 468–488 threads the bilayer; that stretch reads TFSGSSSRTGPALSALAVCVQ. Residues 489-494 lie on the Cytoplasmic side of the membrane; it reads MLRLLL.

This sequence belongs to the TIKI family. The cofactor is Mn(2+). Co(2+) serves as cofactor.

Its subcellular location is the cell membrane. Its function is as follows. Metalloprotease that acts as a negative regulator of the Wnt signaling pathway by mediating the cleavage of the N-terminal residues of a subset of Wnt proteins. Following cleavage, Wnt proteins become oxidized and form large disulfide-bond oligomers, leading to their inactivation. The sequence is that of Metalloprotease TIKI1 (trabd2a) from Danio rerio (Zebrafish).